The chain runs to 436 residues: Acetyl-CoA decarbonylase/synthase complex subunit delta 1 (436 aa).

It belongs to the CdhD family. As to quaternary structure, heterodimer of delta and gamma chains. The ACDS complex is made up of alpha, epsilon, beta, gamma and delta chains with a probable stoichiometry of (alpha(2)epsilon(2))(4)-beta(8)-(gamma(1)delta(1))(8) (Potential).

It participates in one-carbon metabolism; methanogenesis from acetate. Functionally, part of a complex that catalyzes the reversible cleavage of acetyl-CoA, allowing growth on acetate as sole source of carbon and energy. Probably maintains the overall quaternary structure of the ACDS complex. In Methanosarcina thermophila, this protein is Acetyl-CoA decarbonylase/synthase complex subunit delta 1 (cdhD1).